A 349-amino-acid chain; its full sequence is Hypoxia-inducible factor 1-alpha inhibitor (349 aa).

A compositionally biased stretch (low complexity) spans 1–10; sequence MAATAAEAVA. Residues 1-51 form a disordered region; it reads MAATAAEAVASGSGEPREEAGALGPAWDESQLRSYSFPTRPIPRLSQSDPR. N-acetylalanine is present on A2. Residues 2–125 form an interaction with VHL region; it reads AATAAEAVAS…PRSNREEMKF (124 aa). The 171-residue stretch at 142-312 folds into the JmjC domain; it reads ERLYLQQTLN…PKRIEYPLKA (171 aa). Y145 serves as a coordination point for 2-oxoglutarate. Substrate contacts are provided by residues D152 and 181–183; that span reads QLT. Position 196 (T196) interacts with 2-oxoglutarate. Positions 199 and 201 each coordinate Fe cation. 201–203 contributes to the substrate binding site; the sequence is DEQ. Positions 205 and 214 each coordinate 2-oxoglutarate. 238–239 contributes to the substrate binding site; it reads RQ. H279 lines the Fe cation pocket. Residue N294 coordinates 2-oxoglutarate. 2 residues coordinate substrate: A300 and N321.

Homodimer; homodimerization is essential for catalytic activity. Interacts with VHL and HIF1A. Part of a complex with VHL, HIF1A and HDAC1 or HDAC2 or HDAC3. Interacts with NFKB1 and NFKBIA. Interacts with NOTCH1, NOTCH2 and NOTCH3 but not with NOTCH4. Interacts with APBA3; binding inhibits HIF1AN binding to HIF1A. Interacts with TNKS2. Interacts with PPP1R12A. Interacts with ASB4. Interacts with UBE3A. Interacts with ANKS3. Interacts with NECAB3; the interaction is indirect and seems to be mediated by APBA3. Fe(2+) serves as cofactor.

The protein resides in the nucleus. It is found in the cytoplasm. The protein localises to the perinuclear region. It catalyses the reaction L-asparaginyl-[hypoxia-inducible factor alpha subunit] + 2-oxoglutarate + O2 = (3S)-3-hydroxy-L-asparaginyl-[hypoxia-inducible factor alpha subunit] + succinate + CO2. The enzyme catalyses L-histidyl-[ankyrin-repeat domain protein] + 2-oxoglutarate + O2 = (3S)-3-hydroxy-L-histidyl-[ankyrin-repeat domain protein] + succinate + CO2. It carries out the reaction L-asparaginyl-[ankyrin-repeat domain protein] + 2-oxoglutarate + O2 = (3S)-3-hydroxy-L-asparaginyl-[ankyrin-repeat domain protein] + succinate + CO2. The catalysed reaction is L-aspartyl-[ankyrin-repeat domain protein] + 2-oxoglutarate + O2 = (3S)-3-hydroxy-L-aspartyl-[ankyrin-repeat domain protein] + succinate + CO2. Functionally, hydroxylates HIF-1 alpha at 'Asn-803' in the C-terminal transactivation domain (CAD). Functions as an oxygen sensor and, under normoxic conditions, the hydroxylation prevents interaction of HIF-1 with transcriptional coactivators including Cbp/p300-interacting transactivator. Involved in transcriptional repression through interaction with HIF1A, VHL and histone deacetylases. Hydroxylates specific Asn residues within ankyrin repeat domains (ARD) of NFKB1, NFKBIA, NOTCH1, ASB4, PPP1R12A and several other ARD-containing proteins. Also hydroxylates Asp and His residues within ARDs of ANK1 and TNKS2, respectively. Negatively regulates NOTCH1 activity, accelerating myogenic differentiation. Positively regulates ASB4 activity, promoting vascular differentiation. The protein is Hypoxia-inducible factor 1-alpha inhibitor (HIF1AN) of Homo sapiens (Human).